Consider the following 124-residue polypeptide: Fluoride-specific ion channel FluC (124 aa).

The next 4 helical transmembrane spans lie at 4–24 (FVLVATGGIFGSLARYVLSGV), 35–55 (YGTVLVNLLGSLLFGLVWGIL), 67–87 (LLLLTGFMGSLTTFSTLTYEG), and 100–120 (ALYIVGQTVAGIMLVWFGAGL). Na(+) contacts are provided by G75 and T78.

Belongs to the fluoride channel Fluc/FEX (TC 1.A.43) family.

It is found in the cell inner membrane. The catalysed reaction is fluoride(in) = fluoride(out). With respect to regulation, na(+) is not transported, but it plays an essential structural role and its presence is essential for fluoride channel function. Functionally, fluoride-specific ion channel. Important for reducing fluoride concentration in the cell, thus reducing its toxicity. This is Fluoride-specific ion channel FluC from Nitratidesulfovibrio vulgaris (strain ATCC 29579 / DSM 644 / CCUG 34227 / NCIMB 8303 / VKM B-1760 / Hildenborough) (Desulfovibrio vulgaris).